A 516-amino-acid chain; its full sequence is Pickpocket protein 11 (516 aa).

The next 2 membrane-spanning stretches (helical) occupy residues 117 to 137 and 454 to 474; these read ILWW…VIMS and FIGT…VSVF.

This sequence belongs to the amiloride-sensitive sodium channel (TC 1.A.6) family. In terms of tissue distribution, expressed in embryonic and larval tracheal systems in the dorsal trunk and transverse connective (TC), but not in the junction between the dorsal trunk and TC, and in several tracheal branches and terminal cells. In larvae, also expressed in ventral pits. Expressed in the taste-sensing terminal organ of the larval head. In adult, expressed in hairs on the tibia, femur, tarsi of the leg and wing margin.

The protein localises to the membrane. Functionally, part of a complex that plays a role in tracheal liquid clearance. In both larvae and adults, contributes to the behavioral response to salt. Probable role in sodium transport. This Drosophila melanogaster (Fruit fly) protein is Pickpocket protein 11 (ppk11).